Consider the following 503-residue polypeptide: WD repeat-containing protein 55 homolog (503 aa).

Disordered regions lie at residues 1 to 21 (MHTH…DLDD) and 35 to 132 (ALVG…DDLD). Acidic residues-rich tracts occupy residues 12–21 (DADELDDLDD), 40–50 (DVSDSDIDEHD), and 78–96 (NAED…DEAE). WD repeat units lie at residues 157 to 196 (KLED…NKLL), 201 to 242 (VHSK…KLYE), 244 to 282 (AHDD…PIFE), 285 to 324 (EVED…LYVQ), 327 to 366 (PYEE…YHCD), and 411 to 450 (QHNM…DFGD). The interval 483–503 (TKEDEDNADNNDAAAGPSNSA) is disordered.

The protein belongs to the WD repeat WDR55 family.

In Drosophila persimilis (Fruit fly), this protein is WD repeat-containing protein 55 homolog.